The sequence spans 385 residues: Succinyl-diaminopimelate desuccinylase (385 aa).

A Zn(2+)-binding site is contributed by His-73. Residue Asp-75 is part of the active site. Asp-106 contributes to the Zn(2+) binding site. The active-site Proton acceptor is Glu-141. Positions 142, 170, and 359 each coordinate Zn(2+).

Belongs to the peptidase M20A family. DapE subfamily. Homodimer. Zn(2+) serves as cofactor. Requires Co(2+) as cofactor.

It catalyses the reaction N-succinyl-(2S,6S)-2,6-diaminopimelate + H2O = (2S,6S)-2,6-diaminopimelate + succinate. The protein operates within amino-acid biosynthesis; L-lysine biosynthesis via DAP pathway; LL-2,6-diaminopimelate from (S)-tetrahydrodipicolinate (succinylase route): step 3/3. Catalyzes the hydrolysis of N-succinyl-L,L-diaminopimelic acid (SDAP), forming succinate and LL-2,6-diaminopimelate (DAP), an intermediate involved in the bacterial biosynthesis of lysine and meso-diaminopimelic acid, an essential component of bacterial cell walls. The chain is Succinyl-diaminopimelate desuccinylase from Methylorubrum extorquens (strain CM4 / NCIMB 13688) (Methylobacterium extorquens).